The primary structure comprises 151 residues: Tetratricopeptide repeat protein 32 (151 aa).

3 TPR repeats span residues 8–41 (SHAT…CACA), 58–91 (ATAY…QPNF), and 92–125 (EVPY…NPGF).

The chain is Tetratricopeptide repeat protein 32 (TTC32) from Homo sapiens (Human).